The sequence spans 157 residues: 2-C-methyl-D-erythritol 2,4-cyclodiphosphate synthase (157 aa).

Aspartate 9 and histidine 11 together coordinate a divalent metal cation. 4-CDP-2-C-methyl-D-erythritol 2-phosphate contacts are provided by residues 9 to 11 and 35 to 36; these read DVH and HS. An a divalent metal cation-binding site is contributed by histidine 43. 4-CDP-2-C-methyl-D-erythritol 2-phosphate contacts are provided by residues 57-59, 62-66, 101-107, 133-136, phenylalanine 140, and arginine 143; these read DIG, FPDTD, AEKPKMA, and TTTE.

Belongs to the IspF family. As to quaternary structure, homotrimer. Requires a divalent metal cation as cofactor.

The catalysed reaction is 4-CDP-2-C-methyl-D-erythritol 2-phosphate = 2-C-methyl-D-erythritol 2,4-cyclic diphosphate + CMP. It participates in isoprenoid biosynthesis; isopentenyl diphosphate biosynthesis via DXP pathway; isopentenyl diphosphate from 1-deoxy-D-xylulose 5-phosphate: step 4/6. Its function is as follows. Involved in the biosynthesis of isopentenyl diphosphate (IPP) and dimethylallyl diphosphate (DMAPP), two major building blocks of isoprenoid compounds. Catalyzes the conversion of 4-diphosphocytidyl-2-C-methyl-D-erythritol 2-phosphate (CDP-ME2P) to 2-C-methyl-D-erythritol 2,4-cyclodiphosphate (ME-CPP) with a corresponding release of cytidine 5-monophosphate (CMP). The sequence is that of 2-C-methyl-D-erythritol 2,4-cyclodiphosphate synthase from Listeria monocytogenes serotype 4b (strain CLIP80459).